Reading from the N-terminus, the 118-residue chain is Large ribosomal subunit protein uL24 (118 aa).

It belongs to the universal ribosomal protein uL24 family. As to quaternary structure, part of the 50S ribosomal subunit.

In terms of biological role, one of two assembly initiator proteins, it binds directly to the 5'-end of the 23S rRNA, where it nucleates assembly of the 50S subunit. Functionally, one of the proteins that surrounds the polypeptide exit tunnel on the outside of the subunit. The protein is Large ribosomal subunit protein uL24 of Prochlorococcus marinus (strain MIT 9215).